The sequence spans 286 residues: Interferon-induced 35 kDa protein (286 aa).

Positions 5–26 are leucine-zipper; sequence LDAALHALQEEQARLKMRLWDL. NID domains lie at 81 to 170 and 183 to 266; these read ALIT…GDVD and FARD…GEVE.

The protein belongs to the NMI family. As to quaternary structure, homodimer. Also interacts with BATF. Interacts with TRIM21. Interacts with NMI; the interaction is direct and is facilitated by TRIM21. Post-translationally, phosphorylated. Dephosphorylation correlates with the formation of a complex with NMI. As to expression, expressed in a wide range of cell types, including fibroblasts, macrophages, and epithelial cells.

The protein localises to the cytoplasm. Its subcellular location is the nucleus. It localises to the secreted. Its function is as follows. Acts as a signaling pathway regulator involved in innate immune system response. In response to interferon IFN-alpha, associates in a complex with signaling pathway regulator NMI to regulate immune response; the complex formation prevents proteasome-mediated degradation of IFI35 and correlates with IFI35 dephosphorylation. In complex with NMI, inhibits virus-triggered type I interferon/IFN-beta production. In complex with NMI, negatively regulates nuclear factor NF-kappa-B signaling by inhibiting the nuclear translocation, activation and transcription of the NF-kappa-B subunit p65/RELA, resulting in the inhibition of endothelial cell proliferation, migration and re-endothelialization of injured arteries. Beside its role as an intracellular signaling pathway regulator, also functions extracellularly as damage-associated molecular patterns (DAMPs) to promote inflammation when actively released by macrophage to the extracellular space during cell injury and pathogen invasion. Macrophage-secreted IFI35 activates NF-kappa-B signaling in adjacent macrophages through Toll-like receptor 4/TLR4 activation, thereby inducing NF-kappa-B translocation from the cytoplasm into the nucleus which promotes the release of pro-inflammatory cytokines. This chain is Interferon-induced 35 kDa protein, found in Homo sapiens (Human).